The chain runs to 790 residues: Kinesin-like protein KIF9 (790 aa).

A Kinesin motor domain is found at 6–340 (KVHAFVRVKP…LRFASRMKLV (335 aa)). ATP contacts are provided by residues 12–14 (RVK) and 93–100 (GQTGAGKT). Residues 342–380 (TEPAINEKYDAERMVKNLEKELALLKQELAIHDSLTNRT) are a coiled coil. A disordered region spans residues 477–578 (QNFGLGVAPF…IRPDTPPSKP (102 aa)). Polar residues predominate over residues 525-534 (VSTSKTQLVP). The residue at position 530 (threonine 530) is a Phosphothreonine. Composition is skewed to basic and acidic residues over residues 537-552 (KDGD…RETS) and 561-570 (SPKEELRPIR). Serine 546 carries the post-translational modification Phosphoserine. Residues 658–690 (LLILKLKDLKKQYRSEYQDLRDLRAEIQYCQHL) adopt a coiled-coil conformation.

Belongs to the TRAFAC class myosin-kinesin ATPase superfamily. Kinesin family. As to quaternary structure, interacts with HYDIN.

The protein resides in the cytoplasm. It is found in the cytoskeleton. It localises to the cell projection. Its subcellular location is the cilium. The protein localises to the flagellum. The protein resides in the flagellum axoneme. Functionally, essential for normal male fertility and for progressive motility of spermatozoa. The sequence is that of Kinesin-like protein KIF9 (KIF9) from Homo sapiens (Human).